The following is a 269-amino-acid chain: Cytochrome c oxidase subunit 3 (269 aa).

At 1 to 22 (MTNLIRSNFQDHPFHLVSPSPW) the chain is on the mitochondrial matrix side. The helical transmembrane segment at 23–41 (PLNTSVCLLNLTTTGALSM) threads the bilayer. At 42 to 48 (HNFNNIH) the chain is on the mitochondrial intermembrane side. A helical transmembrane segment spans residues 49–73 (YLYYIALIGLVSAMFLWFRDIISEG). Residues 74-80 (TFLGDHT) are Mitochondrial matrix-facing. A helical membrane pass occupies residues 81–114 (LAVQRGLNLGIILFIVSEALFFLAIFWAFFHSAL). Topologically, residues 115 to 137 (TPTVELGAQWPPIGIEPVNPFEL) are mitochondrial intermembrane. The helical transmembrane segment at 138–161 (PLLNTVILLSSGATITYAHHALIK) threads the bilayer. Over 162–164 (GER) the chain is Mitochondrial matrix. Residues 165-188 (EGALYGSIATILLAIIFTGFQGVE) traverse the membrane as a helical segment. Topologically, residues 189-201 (YSVSSFTISDGAF) are mitochondrial intermembrane. The chain crosses the membrane as a helical span at residues 202-230 (GTCFFFSTGFHGIHVIIGTIFLAVALWRI). The Mitochondrial matrix segment spans residues 231–248 (FAYHLTDNHHVGFEGGIL). A helical transmembrane segment spans residues 249-265 (YWHFVDVVWLFLYISVY). At 266–269 (YWGS) the chain is on the mitochondrial intermembrane side.

The protein belongs to the cytochrome c oxidase subunit 3 family. As to quaternary structure, component of the cytochrome c oxidase (complex IV, CIV), a multisubunit enzyme composed of 11 subunits. The complex is composed of a catalytic core of 3 subunits Cox1, Cox2 and Cox3, encoded in the mitochondrial DNA, and 8 supernumerary subunits Cox4, Cox5a/Cox5, Cox6, Cox7, Cox8, Cox7a/Cox9, Cox6b/Cox12 and Cox6a/Cox13, which are encoded in the nuclear genome. The complex exists as a monomer or a dimer and forms respiratory supercomplexes (SCs) in the inner mitochondrial membrane with NADH-ubiquinone oxidoreductase (complex I, CI) and ubiquinol-cytochrome c oxidoreductase (cytochrome b-c1 complex, complex III, CIII), resulting in various different assemblies (supercomplexes I(1)IV(1), I(1)III(3)IV(2), III(2)IV(1) and III(2)IV(2) as well as larger supercomplexes of compositions like I(1)III(2)IV(5-6)).

The protein resides in the mitochondrion inner membrane. It carries out the reaction 4 Fe(II)-[cytochrome c] + O2 + 8 H(+)(in) = 4 Fe(III)-[cytochrome c] + 2 H2O + 4 H(+)(out). In terms of biological role, component of the cytochrome c oxidase, the last enzyme in the mitochondrial electron transport chain which drives oxidative phosphorylation. The respiratory chain contains 3 multisubunit complexes succinate dehydrogenase (complex II, CII), ubiquinol-cytochrome c oxidoreductase (cytochrome b-c1 complex, complex III, CIII) and cytochrome c oxidase (complex IV, CIV), that cooperate to transfer electrons derived from NADH and succinate to molecular oxygen, creating an electrochemical gradient over the inner membrane that drives transmembrane transport and the ATP synthase. Cytochrome c oxidase is the component of the respiratory chain that catalyzes the reduction of oxygen to water. Electrons originating from reduced cytochrome c in the intermembrane space (IMS) are transferred via the dinuclear copper A center (CU(A)) of Cox2 and heme A of Cox1 to the active site in Cox1, a binuclear center (BNC) formed by heme A3 and copper B (CU(B)). The BNC reduces molecular oxygen to 2 water molecules using 4 electrons from cytochrome c in the IMS and 4 protons from the mitochondrial matrix. This Neurospora crassa (strain ATCC 24698 / 74-OR23-1A / CBS 708.71 / DSM 1257 / FGSC 987) protein is Cytochrome c oxidase subunit 3 (cox-3).